A 533-amino-acid chain; its full sequence is Monogalactosyldiacylglycerol synthase 1, chloroplastic (533 aa).

A 1,2-diacyl-sn-glycero-3-phospho-(1'-sn-glycerol) contacts are provided by His155 and Pro189. His155 contacts UDP. A required for binding to diacyl glycerol region spans residues 192 to 215; the sequence is QLPRSYNFLVKHGTLWKMTYYGTS. Residues Arg324, Phe413, Ile414, 434–438, and Glu456 each bind UDP; that span reads GTIAE.

It belongs to the glycosyltransferase 28 family. Homodimer. As to expression, expressed in roots, stems, leaves, flowers, siliques and seeds.

The protein resides in the plastid. The protein localises to the chloroplast inner membrane. The catalysed reaction is a 1,2-diacyl-sn-glycerol + UDP-alpha-D-galactose = a 1,2-diacyl-3-O-(beta-D-galactosyl)-sn-glycerol + UDP + H(+). It carries out the reaction 1,2-di-(9Z,12Z-octadecadienoyl)-sn-glycerol + UDP-alpha-D-galactose = 1,2-di-(9Z,12Z-octadecadienoyl)-3-beta-D-galactosyl-sn-glycerol + UDP + H(+). The enzyme catalyses 1-(9Z-octadecenoyl)-2-hexadecanoyl-sn-glycerol + UDP-alpha-D-galactose = 1-(9Z-octadecenoyl)-2-hexadecanoyl-3-beta-D-galactosyl-sn-glycerol + UDP + H(+). It catalyses the reaction 1,2-di-(9Z-octadecenoyl)-sn-glycerol + UDP-alpha-D-galactose = 1,2-di-(9Z-octadecenoyl)-3-beta-D-galactosyl-sn-glycerol + UDP + H(+). With respect to regulation, activated by phosphatidate (PA) and phosphatidylglycerol (PG). Inhibited by galvestine-1. In terms of biological role, involved in the synthesis of the major structural component of photosynthetic membranes. Required for proper thylakoid membrane biogenesis. Does not discriminate between prokaryotic (18:1/16:0) or eukaryotic (18:2/18:2) 1,2-diacylglycerol species, but operates with some preference for the prokaryotic one. Is responsible for most galactolipid synthesis in chloroplasts. Required for the formation of thylakoid membranes and functional photosynthetic electron transport during cotyledons greening in young seedlings. May link galactolipid synthesis with the coordinated transcriptional regulation of chloroplasts and other organelles during cotyledon greening. This is Monogalactosyldiacylglycerol synthase 1, chloroplastic from Arabidopsis thaliana (Mouse-ear cress).